A 215-amino-acid chain; its full sequence is MSKVYDWFEERLEIQAIADDITSKYVPPHVNIFHCLGGITLTCFLVQVATGFAMTFYYRPTVTEAFASVQYIMTEANFGWLIRSVHRWSASMMVLMMILHVFRVYLTGGFKKPRELTWVTGVVLAVLTASFGVTGYSLPWDQIGYWAVKIVTGVPEAIPVIGSPLVELLRGSASVGQSTLTRFYSLHTFVLPLLTAVFMLMHFPMIRKQGISGPL.

The chain crosses the membrane as a helical span at residues 32 to 52 (IFHCLGGITLTCFLVQVATGF). Residue Cys35 coordinates heme c. Positions 86 and 100 each coordinate heme b. 3 helical membrane-spanning segments follow: residues 90–110 (ASMM…TGGF), 116–136 (LTWV…VTGY), and 186–206 (LHTF…FPMI). The heme b site is built by His187 and His202.

Belongs to the cytochrome b family. PetB subfamily. As to quaternary structure, the 4 large subunits of the cytochrome b6-f complex are cytochrome b6, subunit IV (17 kDa polypeptide, PetD), cytochrome f and the Rieske protein, while the 4 small subunits are PetG, PetL, PetM and PetN. The complex functions as a dimer. Heme b serves as cofactor. The cofactor is heme c.

Its subcellular location is the plastid. The protein localises to the chloroplast thylakoid membrane. Its function is as follows. Component of the cytochrome b6-f complex, which mediates electron transfer between photosystem II (PSII) and photosystem I (PSI), cyclic electron flow around PSI, and state transitions. The polypeptide is Cytochrome b6 (Calycanthus floridus var. glaucus (Eastern sweetshrub)).